The chain runs to 602 residues: Elongation factor 4 (602 aa).

The tr-type G domain maps to 5-187 (DHIRNFAIIA…QIIVSLPAPE (183 aa)). Residues 17–22 (DHGKST) and 134–137 (NKVD) contribute to the GTP site.

The protein belongs to the TRAFAC class translation factor GTPase superfamily. Classic translation factor GTPase family. LepA subfamily.

The protein resides in the cell inner membrane. It carries out the reaction GTP + H2O = GDP + phosphate + H(+). In terms of biological role, required for accurate and efficient protein synthesis under certain stress conditions. May act as a fidelity factor of the translation reaction, by catalyzing a one-codon backward translocation of tRNAs on improperly translocated ribosomes. Back-translocation proceeds from a post-translocation (POST) complex to a pre-translocation (PRE) complex, thus giving elongation factor G a second chance to translocate the tRNAs correctly. Binds to ribosomes in a GTP-dependent manner. In Pelagibacter ubique (strain HTCC1062), this protein is Elongation factor 4.